A 185-amino-acid polypeptide reads, in one-letter code: MILVDWQITDRIERGYIGIDPYNPELIQPNSIDIRLGNHFVWYTPGDEIIDPYIRDTVTGGTEEMTAESIVLHPGQFVLAETMEAIRLPDNIVASIEGKSSIARLGIELHQTGGWIDAGFAGSITLEMCNVNQRPVRMHAGMPIGQLVFYTTERALCPYNAKKDAKYLNQRQATLSRYYENKKRA.

DCTP contacts are provided by residues 99-104, D117, 125-127, Q146, Y159, K166, and Q170; these read KSSIAR and TLE. E127 serves as the catalytic Proton donor/acceptor.

It belongs to the dCTP deaminase family. As to quaternary structure, homotrimer.

The enzyme catalyses dCTP + 2 H2O = dUMP + NH4(+) + diphosphate. The protein operates within pyrimidine metabolism; dUMP biosynthesis; dUMP from dCTP: step 1/1. Bifunctional enzyme that catalyzes both the deamination of dCTP to dUTP and the hydrolysis of dUTP to dUMP without releasing the toxic dUTP intermediate. The sequence is that of dCTP deaminase, dUMP-forming from Methanospirillum hungatei JF-1 (strain ATCC 27890 / DSM 864 / NBRC 100397 / JF-1).